The sequence spans 448 residues: Methylenetetrahydrofolate--tRNA-(uracil-5-)-methyltransferase TrmFO (448 aa).

13–18 (GAGLAG) serves as a coordination point for FAD.

The protein belongs to the MnmG family. TrmFO subfamily. The cofactor is FAD.

Its subcellular location is the cytoplasm. The enzyme catalyses uridine(54) in tRNA + (6R)-5,10-methylene-5,6,7,8-tetrahydrofolate + NADH + H(+) = 5-methyluridine(54) in tRNA + (6S)-5,6,7,8-tetrahydrofolate + NAD(+). It carries out the reaction uridine(54) in tRNA + (6R)-5,10-methylene-5,6,7,8-tetrahydrofolate + NADPH + H(+) = 5-methyluridine(54) in tRNA + (6S)-5,6,7,8-tetrahydrofolate + NADP(+). Catalyzes the folate-dependent formation of 5-methyl-uridine at position 54 (M-5-U54) in all tRNAs. In Streptococcus pyogenes serotype M2 (strain MGAS10270), this protein is Methylenetetrahydrofolate--tRNA-(uracil-5-)-methyltransferase TrmFO.